Here is a 374-residue protein sequence, read N- to C-terminus: Chaperone protein DnaJ (374 aa).

Positions 4 to 68 constitute a J domain; sequence DYYEILGVSR…EMKARFDRFG (65 aa). The segment at 132–214 adopts a CR-type zinc-finger fold; it reads GGDKELTIKH…CGGRGQKEAT (83 aa). Zn(2+) contacts are provided by Cys145, Cys148, Cys162, Cys165, Cys188, Cys191, Cys202, and Cys205. 4 CXXCXGXG motif repeats span residues 145-152, 162-169, 188-195, and 202-209; these read CGTCNGSG, CSTCGGTG, CPSCNGSG, and CVDCGGRG.

This sequence belongs to the DnaJ family. As to quaternary structure, homodimer. It depends on Zn(2+) as a cofactor.

The protein resides in the cytoplasm. Participates actively in the response to hyperosmotic and heat shock by preventing the aggregation of stress-denatured proteins and by disaggregating proteins, also in an autonomous, DnaK-independent fashion. Unfolded proteins bind initially to DnaJ; upon interaction with the DnaJ-bound protein, DnaK hydrolyzes its bound ATP, resulting in the formation of a stable complex. GrpE releases ADP from DnaK; ATP binding to DnaK triggers the release of the substrate protein, thus completing the reaction cycle. Several rounds of ATP-dependent interactions between DnaJ, DnaK and GrpE are required for fully efficient folding. Also involved, together with DnaK and GrpE, in the DNA replication of plasmids through activation of initiation proteins. The protein is Chaperone protein DnaJ of Trichodesmium erythraeum (strain IMS101).